The sequence spans 207 residues: Peptidyl-tRNA hydrolase (207 aa).

Tyr-17 lines the tRNA pocket. His-22 (proton acceptor) is an active-site residue. TRNA is bound by residues Phe-68, Asn-70, and Asn-116.

This sequence belongs to the PTH family. In terms of assembly, monomer.

It is found in the cytoplasm. It carries out the reaction an N-acyl-L-alpha-aminoacyl-tRNA + H2O = an N-acyl-L-amino acid + a tRNA + H(+). Functionally, hydrolyzes ribosome-free peptidyl-tRNAs (with 1 or more amino acids incorporated), which drop off the ribosome during protein synthesis, or as a result of ribosome stalling. In terms of biological role, catalyzes the release of premature peptidyl moieties from peptidyl-tRNA molecules trapped in stalled 50S ribosomal subunits, and thus maintains levels of free tRNAs and 50S ribosomes. This chain is Peptidyl-tRNA hydrolase, found in Buchnera aphidicola subsp. Baizongia pistaciae (strain Bp).